The chain runs to 277 residues: Large ribosomal subunit protein uL2 (277 aa).

The segment at Ser211 to Lys277 is disordered.

It belongs to the universal ribosomal protein uL2 family. Part of the 50S ribosomal subunit. Forms a bridge to the 30S subunit in the 70S ribosome.

One of the primary rRNA binding proteins. Required for association of the 30S and 50S subunits to form the 70S ribosome, for tRNA binding and peptide bond formation. It has been suggested to have peptidyltransferase activity; this is somewhat controversial. Makes several contacts with the 16S rRNA in the 70S ribosome. In Staphylococcus epidermidis (strain ATCC 35984 / DSM 28319 / BCRC 17069 / CCUG 31568 / BM 3577 / RP62A), this protein is Large ribosomal subunit protein uL2.